Reading from the N-terminus, the 422-residue chain is Adenylosuccinate synthetase (422 aa).

Residues 11–17 (GDEGKGK) and 39–41 (GHT) contribute to the GTP site. Catalysis depends on D12, which acts as the Proton acceptor. Mg(2+)-binding residues include D12 and G39. IMP contacts are provided by residues 12–15 (DEGK), 37–40 (NAGH), T129, R143, N219, T234, and R298. H40 acts as the Proton donor in catalysis. 294 to 300 (VTTGRRR) contacts substrate. GTP contacts are provided by residues R300, 326–328 (KLD), and 409–411 (GTG).

Belongs to the adenylosuccinate synthetase family. Homodimer. It depends on Mg(2+) as a cofactor.

It is found in the cytoplasm. The catalysed reaction is IMP + L-aspartate + GTP = N(6)-(1,2-dicarboxyethyl)-AMP + GDP + phosphate + 2 H(+). Its pathway is purine metabolism; AMP biosynthesis via de novo pathway; AMP from IMP: step 1/2. Plays an important role in the de novo pathway and in the salvage pathway of purine nucleotide biosynthesis. Catalyzes the first committed step in the biosynthesis of AMP from IMP. This Ajellomyces capsulatus (strain NAm1 / WU24) (Darling's disease fungus) protein is Adenylosuccinate synthetase.